Reading from the N-terminus, the 429-residue chain is MPAIAIVGAQWGDEGKGKATDLLGGRVDYVVKPNGGNNAGHTVVVNGEKFELKLLPAGILSPNAVPVIGNGVVVNLEALFEEIDGLESRGHSCEHLKISANAHLVAPYHQTMDKVTERFLGQRAIGTTGRGIGPTYMDKVARLGIRVQDIFDESILRQKIEGALRQKNELLVKLYNRRAVTVDEIAEYFLGYADRLRPMVVDSVNLLNDALDEGKVVLMEGGQATYLDVDHGTYPFVTSSNPTAGGAAVGAGIGPTRFSRTIGIVKAYTTRVGAGPFPTELFDEMGEQLRTTGGEFGVNTGRPRRTGWYDAVMAHYAARINGFTDYFLTKLDVLTGIEKIPVCVAYEVDGVRHDRMPMTQTEFHHAKPVYELFDGWTEDISGARAFTDLPLNAQHYVEALEKLSGCRISAIGVGPGRDQVVQVRDLIQD.

GTP contacts are provided by residues 12–18 (GDEGKGK) and 40–42 (GHT). Asp13 acts as the Proton acceptor in catalysis. Mg(2+)-binding residues include Asp13 and Gly40. IMP-binding positions include 13–16 (DEGK), 38–41 (NAGH), Thr128, Arg142, Gln223, Thr238, and Arg302. His41 serves as the catalytic Proton donor. 298 to 304 (VNTGRPR) is a substrate binding site. GTP-binding positions include Arg304, 330-332 (KLD), and 412-414 (GVG).

This sequence belongs to the adenylosuccinate synthetase family. As to quaternary structure, homodimer. Mg(2+) serves as cofactor.

It localises to the cytoplasm. It carries out the reaction IMP + L-aspartate + GTP = N(6)-(1,2-dicarboxyethyl)-AMP + GDP + phosphate + 2 H(+). The protein operates within purine metabolism; AMP biosynthesis via de novo pathway; AMP from IMP: step 1/2. Functionally, plays an important role in the de novo pathway of purine nucleotide biosynthesis. Catalyzes the first committed step in the biosynthesis of AMP from IMP. This is Adenylosuccinate synthetase from Micrococcus luteus (strain ATCC 4698 / DSM 20030 / JCM 1464 / CCM 169 / CCUG 5858 / IAM 1056 / NBRC 3333 / NCIMB 9278 / NCTC 2665 / VKM Ac-2230) (Micrococcus lysodeikticus).